We begin with the raw amino-acid sequence, 290 residues long: Agmatinase (290 aa).

Mn(2+)-binding residues include H112, D135, H137, D139, D216, and D218.

Belongs to the arginase family. Agmatinase subfamily. It depends on Mn(2+) as a cofactor.

It catalyses the reaction agmatine + H2O = urea + putrescine. It functions in the pathway amine and polyamine biosynthesis; putrescine biosynthesis via agmatine pathway; putrescine from agmatine: step 1/1. In terms of biological role, catalyzes the formation of putrescine from agmatine. The polypeptide is Agmatinase (speB) (Bacillus anthracis).